The primary structure comprises 1109 residues: Ankyrin repeat- and BTB/POZ domain-containing protein 3 (1109 aa).

Residues 168-188 (IVLSWGLAAHCTAAALAALSL) form a helical membrane-spanning segment. A disordered region spans residues 260 to 302 (SCSGPGPGSSSGSGPGPGSGPGAPAADKERETPGGGAASGGPC). Over residues 264 to 280 (PGPGSSSGSGPGPGSGP) the composition is skewed to gly residues. 5 ANK repeats span residues 608–637 (QGMT…DLNV), 654–683 (RHWT…KVEG), 692–721 (YSET…DPLI), 735–764 (GDMN…KEKS), and 830–859 (TWLE…TIQE). A BTB domain is found at 928–994 (SDVTFLVEGR…LYYGGPESLL (67 aa)).

The protein resides in the membrane. This chain is Ankyrin repeat- and BTB/POZ domain-containing protein 3 (Abtb3), found in Mus musculus (Mouse).